An 825-amino-acid chain; its full sequence is NT-3 growth factor receptor (825 aa).

The N-terminal stretch at 1–31 is a signal peptide; sequence MDVSLCPAKCSFWRIFLLGSVWLDYVGSVLA. Cystine bridges form between cysteine 32–cysteine 38 and cysteine 36–cysteine 45. The Extracellular portion of the chain corresponds to 32 to 429; it reads CPANCVCSKT…TVTHKPEEDT (398 aa). Asparagine 68, asparagine 72, and asparagine 79 each carry an N-linked (GlcNAc...) asparagine glycan. LRR repeat units follow at residues 104-125 and 128-149; these read GLQKLTIRNSGLRSIQPRAFAK and HLRYINLSSNRLTTLSWQLFQT. N-linked (GlcNAc...) asparagine glycosylation is found at asparagine 133 and asparagine 163. The LRRCT domain maps to 160 to 209; sequence NFFNCSCDIRWMQLWQEQGEAKLNNQNLYCINADGSQLPLFRMNISQCDL. 2 cysteine pairs are disulfide-bonded: cysteine 164-cysteine 189 and cysteine 166-cysteine 207. 7 N-linked (GlcNAc...) asparagine glycosylation sites follow: asparagine 203, asparagine 218, asparagine 232, asparagine 259, asparagine 267, asparagine 272, and asparagine 294. Ig-like C2-type domains lie at 210–300 and 309–382; these read PEIS…VALT and SLEE…IAKN. An intrachain disulfide couples cysteine 231 to cysteine 284. A disulfide bridge connects residues cysteine 320 and cysteine 362. Residues asparagine 375 and asparagine 388 are each glycosylated (N-linked (GlcNAc...) asparagine). A helical membrane pass occupies residues 430 to 453; the sequence is FGVSIAVGLAAFACVLLVVLFIMI. The Cytoplasmic segment spans residues 454–825; that stretch reads NKYGRRSKFG…ATPIYLDILG (372 aa). The residue at position 493 (serine 493) is a Phosphoserine. Position 516 is a phosphotyrosine; by autocatalysis (tyrosine 516). Positions 538-825 constitute a Protein kinase domain; the sequence is IVLKRELGEG…ATPIYLDILG (288 aa). Residues 544-552 and lysine 572 each bind ATP; that span reads LGEGAFGKV. Residue aspartate 679 is the Proton acceptor of the active site. Phosphotyrosine; by autocatalysis is present on residues tyrosine 705, tyrosine 709, and tyrosine 710.

Belongs to the protein kinase superfamily. Tyr protein kinase family. Insulin receptor subfamily. Exists in a dynamic equilibrium between monomeric (low affinity) and dimeric (high affinity) structures. Binds SH2B2. Interacts with SQSTM1 and KIDINS220. Interacts with PTPRS. Interacts with MAPK8IP3/JIP3. Ligand-mediated auto-phosphorylation.

It is found in the membrane. The catalysed reaction is L-tyrosyl-[protein] + ATP = O-phospho-L-tyrosyl-[protein] + ADP + H(+). In terms of biological role, receptor tyrosine kinase involved in nervous system and probably heart development. Upon binding of its ligand NTF3/neurotrophin-3, NTRK3 autophosphorylates and activates different signaling pathways, including the phosphatidylinositol 3-kinase/AKT and the MAPK pathways, that control cell survival and differentiation. The protein is NT-3 growth factor receptor (NTRK3) of Macaca fascicularis (Crab-eating macaque).